A 119-amino-acid polypeptide reads, in one-letter code: Protein TusC (119 aa).

Belongs to the DsrF/TusC family. Heterohexamer, formed by a dimer of trimers. The hexameric TusBCD complex contains 2 copies each of TusB, TusC and TusD. The TusBCD complex interacts with TusE.

The protein resides in the cytoplasm. In terms of biological role, part of a sulfur-relay system required for 2-thiolation of 5-methylaminomethyl-2-thiouridine (mnm(5)s(2)U) at tRNA wobble positions. The protein is Protein TusC of Citrobacter koseri (strain ATCC BAA-895 / CDC 4225-83 / SGSC4696).